Here is a 623-residue protein sequence, read N- to C-terminus: MGTVNKPVVGVLMGFGIITGTLRITNPVRASVLRYDDFHIDEDKLDTNSVYEPYYHSDHAESSWVNRGESSRKAYDHNSPYIWPRNDYDGFLENAHEHHGVYNQGRGIDSGERLMQPTQMSAQEDLGDDTGIHVIPTLNGDDRHKIVNVDQRQYGDVFKGDLNPKPQGQRLIEVSVEENHPFTLRAPIQRIYGVRYTETWSFLPSLTCTGDAAPAIQHICLKHTTCFQDVVVDVDCAENTKEDQLAEISYRFQGKKEADQPWIVVNTSTLFDELELDPPEIEPGVLKVLRTEKQYLGVYIWNMRGSDGTSTYATFLVTWKGDEKTRNPTPAVTPQPRGAEFHMWNYHSHVFSVGDTFSLAMHLQYKIHEAPFDLLLEWLYVPIDPTCQPMRLYSTCLYHPNAPQCLSHMNSGCTFTSPHLAQRVASTVYQNCEHADNYTAYCLGISHMEPSFGLILHDGGTTLKFVDTPESLSGLYVFVVYFNGHVEAVAYTVVSTVDHFVNAIEERGFPPTAGQPPATTKPKEITPVNPGTSPLLRYAAWTGGLAAVVLLCLVIFLICTAKRMRVKAYRVDKSPYNQSMYYAGLPVDDFEDSESTDTEEEFGNAIGGSHGGSSYTVYIDKTR.

The first 30 residues, Met1–Ala30, serve as a signal peptide directing secretion. Residues Ser31–Tyr538 are Virion surface-facing. Residues Cys208–Cys236 form an interaction with gI region. Residue Asn266 is glycosylated (N-linked (GlcNAc...) asparagine; by host). Positions Ser352–His499 are fc-binding. 3 disulfides stabilise this stretch: Cys387/Cys413, Cys396/Cys405, and Cys432/Cys442. An N-linked (GlcNAc...) asparagine; by host glycan is attached at Asn437. 2 positions are modified to sulfotyrosine; by host: Tyr438 and Tyr441. The helical transmembrane segment at Ala539 to Cys559 threads the bilayer. Topologically, residues Thr560 to Arg623 are intravirion. Positions Tyr582–Leu585 match the Internalization motif motif. Residues Asp588 to Glu601 form an acidic region. Phosphoserine is present on residues Ser593 and Ser595. Thr596 and Thr598 each carry phosphothreonine.

It belongs to the alphaherpesvirinae glycoprotein E family. Interacts (via N-terminus) with host receptor IDE (via N-terminus). Interacts with gI; this interaction enhances the Fc receptor function of gE. The heterodimer gE/gI interacts with the Fc part of host IgG. Post-translationally, phosphorylated on serines within the acidic cluster. Phosphorylation determines whether endocytosed viral gE traffics to the trans-Golgi network or recycles to the cell membrane.

It localises to the virion membrane. The protein localises to the host cell membrane. It is found in the host cell junction. Its subcellular location is the host Golgi apparatus membrane. The protein resides in the host endosome membrane. In terms of biological role, envelope glycoprotein that binds to the potential host cell entry receptor IDE. In epithelial cells, the heterodimer gE/gI is required for the cell-to-cell spread of the virus, by sorting nascent virions to cell junctions. Once the virus reaches the cell junctions, virus particles can spread to adjacent cells extremely rapidly through interactions with cellular receptors that accumulate at these junctions. Implicated in basolateral spread in polarized cells. In neuronal cells, gE/gI is essential for the anterograde spread of the infection throughout the host nervous system. Together with US9, the heterodimer gE/gI is involved in the sorting and transport of viral structural components toward axon tips. Its function is as follows. The heterodimer gE/gI serves as a receptor for the Fc part of host IgG. Dissociation of gE/gI from IgG occurs at acidic pH. May thus be involved in anti-VZV antibodies bipolar bridging, followed by intracellular endocytosis and degradation, thereby interfering with host IgG-mediated immune responses. The sequence is that of Envelope glycoprotein E (gE) from Homo sapiens (Human).